The chain runs to 118 residues: D-dopachrome decarboxylase (118 aa).

P2 is modified (N-acetylproline).

This sequence belongs to the MIF family. Homotrimer.

The protein localises to the cytoplasm. It carries out the reaction D-dopachrome + H(+) = 5,6-dihydroxyindole + CO2. Its function is as follows. Tautomerization of D-dopachrome with decarboxylation to give 5,6-dihydroxyindole (DHI). This is D-dopachrome decarboxylase (DDT) from Gallus gallus (Chicken).